A 499-amino-acid chain; its full sequence is Phenylalanine--tRNA ligase alpha subunit (499 aa).

L-phenylalanine is bound by residues Thr-330, 372–374, and Tyr-412; that span reads QVE. Residue Glu-414 coordinates Mg(2+). Phe-438 contributes to the L-phenylalanine binding site.

This sequence belongs to the class-II aminoacyl-tRNA synthetase family. Phe-tRNA synthetase alpha subunit type 2 subfamily. As to quaternary structure, tetramer of two alpha and two beta subunits. Requires Mg(2+) as cofactor.

Its subcellular location is the cytoplasm. The enzyme catalyses tRNA(Phe) + L-phenylalanine + ATP = L-phenylalanyl-tRNA(Phe) + AMP + diphosphate + H(+). The chain is Phenylalanine--tRNA ligase alpha subunit (frs2) from Schizosaccharomyces pombe (strain 972 / ATCC 24843) (Fission yeast).